Consider the following 102-residue polypeptide: MKLLAMVALLVTICSLEGALVRRQAAETDVQTLFSQYLQSLTDYGKDLMEKAQPSEIQNQAKAYFQNAQERLTPFVQRTGTNLMDFLSRLMSPEEKPAPAAK.

Positions 1–18 (MKLLAMVALLVTICSLEG) are cleaved as a signal peptide. M49 carries the post-translational modification Methionine sulfoxide.

This sequence belongs to the apolipoprotein A2 family. In terms of assembly, monomer. Interacts with NAXE and NDRG1. As to expression, plasma.

The protein localises to the secreted. Functionally, may stabilize HDL (high density lipoprotein) structure by its association with lipids, and affect the HDL metabolism. This Rattus norvegicus (Rat) protein is Apolipoprotein A-II (Apoa2).